A 263-amino-acid polypeptide reads, in one-letter code: tRNA pseudouridine synthase A (263 aa).

Asp51 serves as the catalytic Nucleophile. Substrate is bound at residue Tyr109.

The protein belongs to the tRNA pseudouridine synthase TruA family. Homodimer.

It catalyses the reaction uridine(38/39/40) in tRNA = pseudouridine(38/39/40) in tRNA. Functionally, formation of pseudouridine at positions 38, 39 and 40 in the anticodon stem and loop of transfer RNAs. The chain is tRNA pseudouridine synthase A from Pseudoalteromonas atlantica (strain T6c / ATCC BAA-1087).